Reading from the N-terminus, the 431-residue chain is Adenylosuccinate lyase (431 aa).

Residues 4 to 5 (RY), 67 to 69 (NHD), and 93 to 94 (TS) contribute to the N(6)-(1,2-dicarboxyethyl)-AMP site. The Proton donor/acceptor role is filled by H141. Residue Q212 participates in N(6)-(1,2-dicarboxyethyl)-AMP binding. The active-site Proton donor/acceptor is S262. N(6)-(1,2-dicarboxyethyl)-AMP-binding positions include S263, 268 to 270 (KKN), and 307 to 311 (SVERY).

This sequence belongs to the lyase 1 family. Adenylosuccinate lyase subfamily. In terms of assembly, homotetramer. Residues from neighboring subunits contribute catalytic and substrate-binding residues to each active site.

The enzyme catalyses N(6)-(1,2-dicarboxyethyl)-AMP = fumarate + AMP. It catalyses the reaction (2S)-2-[5-amino-1-(5-phospho-beta-D-ribosyl)imidazole-4-carboxamido]succinate = 5-amino-1-(5-phospho-beta-D-ribosyl)imidazole-4-carboxamide + fumarate. The protein operates within purine metabolism; AMP biosynthesis via de novo pathway; AMP from IMP: step 2/2. It functions in the pathway purine metabolism; IMP biosynthesis via de novo pathway; 5-amino-1-(5-phospho-D-ribosyl)imidazole-4-carboxamide from 5-amino-1-(5-phospho-D-ribosyl)imidazole-4-carboxylate: step 2/2. Catalyzes two reactions in de novo purine nucleotide biosynthesis. Catalyzes the breakdown of 5-aminoimidazole- (N-succinylocarboxamide) ribotide (SAICAR or 2-[5-amino-1-(5-phospho-beta-D-ribosyl)imidazole-4-carboxamido]succinate) to 5-aminoimidazole-4-carboxamide ribotide (AICAR or 5-amino-1-(5-phospho-beta-D-ribosyl)imidazole-4-carboxamide) and fumarate, and of adenylosuccinate (ADS or N(6)-(1,2-dicarboxyethyl)-AMP) to adenosine monophosphate (AMP) and fumarate. The sequence is that of Adenylosuccinate lyase (purB) from Thermotoga maritima (strain ATCC 43589 / DSM 3109 / JCM 10099 / NBRC 100826 / MSB8).